We begin with the raw amino-acid sequence, 166 residues long: Probable dual specificity protein phosphatase H1 homolog (166 aa).

A Tyrosine-protein phosphatase domain is found at 25-166 (DITKITDYVY…FLNQIIDKYI (142 aa)). Cysteine 108 serves as the catalytic Phosphocysteine intermediate.

This sequence belongs to the protein-tyrosine phosphatase family. Non-receptor class dual specificity subfamily. As to quaternary structure, homodimer.

The protein localises to the virion. It localises to the host cytoplasm. The catalysed reaction is O-phospho-L-tyrosyl-[protein] + H2O = L-tyrosyl-[protein] + phosphate. The enzyme catalyses O-phospho-L-seryl-[protein] + H2O = L-seryl-[protein] + phosphate. Its function is as follows. Serine/Tyrosine phosphatase which down-regulates cellular antiviral response by dephosphorylating activated STAT1 and blocking interferon (IFN)-stimulated innate immune responses. This chain is Probable dual specificity protein phosphatase H1 homolog, found in Vertebrata (FPV).